The sequence spans 92 residues: Large ribosomal subunit protein eL31 (92 aa).

This sequence belongs to the eukaryotic ribosomal protein eL31 family.

This chain is Large ribosomal subunit protein eL31, found in Haloquadratum walsbyi (strain DSM 16790 / HBSQ001).